We begin with the raw amino-acid sequence, 161 residues long: Thy-1 membrane glycoprotein (161 aa).

The N-terminal stretch at 1–19 (MNPVISITLLLSVLQMSRG) is a signal peptide. Position 20 is a pyrrolidone carboxylic acid (Gln20). An Ig-like V-type domain is found at 20–126 (QRVISLTACL…NKTINVIRDK (107 aa)). Intrachain disulfides connect Cys28–Cys130 and Cys38–Cys104. Asn42 is a glycosylation site (N-linked (GlcNAc...) (complex) asparagine; alternate). A glycan (N-linked (GlcNAc...) (high mannose) asparagine; alternate) is linked at Asn42. Asn42 carries an N-linked (GlcNAc...) asparagine; alternate glycan. Ser82 bears the Phosphoserine mark. Asn93 carries N-linked (GlcNAc...) (complex) asparagine; alternate glycosylation. The N-linked (GlcNAc...) asparagine; alternate glycan is linked to Asn93. N-linked (GlcNAc...) (high mannose) asparagine; in brain; alternate glycosylation occurs at Asn117. Residue Asn117 is glycosylated (N-linked (GlcNAc...) (hybrid) asparagine; in brain; alternate). A lipid anchor (GPI-anchor amidated cysteine) is attached at Cys130. A propeptide spans 131 to 161 (GGISLLVQNTSWLLLLLLSLSFLQATDFISL) (removed in mature form).

Post-translationally, glycosylation is tissue specific. Sialylation of N-glycans at Asn-93 in brain and at Asn-42, Asn-93 and Asn-117 in thymus. As to expression, abundant in lymphoid tissues.

The protein localises to the cell membrane. In terms of biological role, may play a role in cell-cell or cell-ligand interactions during synaptogenesis and other events in the brain. The chain is Thy-1 membrane glycoprotein (Thy1) from Rattus norvegicus (Rat).